We begin with the raw amino-acid sequence, 662 residues long: Protein Aster-C (662 aa).

Residues 1–34 (MEGAPTVRQVMNEGDSSLATELQEDVEENPSPTV) form a disordered region. The 68-residue stretch at 69-136 (EEYRRQFTHL…KNITFMTKEK (68 aa)) folds into the GRAM domain. 2 disordered regions span residues 212–237 (SIEDVRPRSPGRSSLDDSGERDEKLS) and 250–284 (VSETESFDGNSSKGGLGKEESQNEKQTKKSLLPTL). Residues 265 to 276 (LGKEESQNEKQT) are compositionally biased toward basic and acidic residues. The region spanning 326 to 497 (HGRLFINRIF…DLLIEESILN (172 aa)) is the VASt domain. A helical transmembrane segment spans residues 557-577 (LIVVMSIFVLLLVLLNVTLFL).

Its subcellular location is the endoplasmic reticulum membrane. The protein localises to the cell membrane. Cholesterol transporter that mediates non-vesicular transport of cholesterol from the plasma membrane (PM) to the endoplasmic reticulum (ER). Contains unique domains for binding cholesterol and the PM, thereby serving as a molecular bridge for the transfer of cholesterol from the PM to the ER. Plays a crucial role in cholesterol homeostasis and has the unique ability to localize to the PM based on the level of membrane cholesterol. In lipid-poor conditions localizes to the ER membrane and in response to excess cholesterol in the PM is recruited to the endoplasmic reticulum-plasma membrane contact sites (EPCS) which is mediated by the GRAM domain. At the EPCS, the sterol-binding VASt/ASTER domain binds to the cholesterol in the PM and facilitates its transfer from the PM to ER. This is Protein Aster-C (GRAMD1C) from Pongo abelii (Sumatran orangutan).